The sequence spans 563 residues: Arginine--tRNA ligase (563 aa).

The 'HIGH' region motif lies at 121–131; sequence PNIAKPFSIGH.

Belongs to the class-I aminoacyl-tRNA synthetase family. As to quaternary structure, monomer.

The protein resides in the cytoplasm. The enzyme catalyses tRNA(Arg) + L-arginine + ATP = L-arginyl-tRNA(Arg) + AMP + diphosphate. The sequence is that of Arginine--tRNA ligase from Streptococcus thermophilus (strain ATCC BAA-250 / LMG 18311).